The chain runs to 131 residues: Large ribosomal subunit protein bL12 (131 aa).

The protein belongs to the bacterial ribosomal protein bL12 family. In terms of assembly, homodimer. Part of the ribosomal stalk of the 50S ribosomal subunit. Forms a multimeric L10(L12)X complex, where L10 forms an elongated spine to which 2 to 4 L12 dimers bind in a sequential fashion. Binds GTP-bound translation factors.

In terms of biological role, forms part of the ribosomal stalk which helps the ribosome interact with GTP-bound translation factors. Is thus essential for accurate translation. This Parasynechococcus marenigrum (strain WH8102) protein is Large ribosomal subunit protein bL12.